A 379-amino-acid polypeptide reads, in one-letter code: uncharacterized protein (379 aa).

The protein belongs to the mimivirus L17x/L18x family.

This is an uncharacterized protein from Acanthamoeba polyphaga mimivirus (APMV).